The primary structure comprises 353 residues: UDP-N-acetylglucosamine--N-acetylmuramyl-(pentapeptide) pyrophosphoryl-undecaprenol N-acetylglucosamine transferase (353 aa).

UDP-N-acetyl-alpha-D-glucosamine is bound by residues 10–12, Asn124, Ser183, and Gln283; that span reads TGG.

Belongs to the glycosyltransferase 28 family. MurG subfamily.

The protein localises to the cell inner membrane. The enzyme catalyses di-trans,octa-cis-undecaprenyl diphospho-N-acetyl-alpha-D-muramoyl-L-alanyl-D-glutamyl-meso-2,6-diaminopimeloyl-D-alanyl-D-alanine + UDP-N-acetyl-alpha-D-glucosamine = di-trans,octa-cis-undecaprenyl diphospho-[N-acetyl-alpha-D-glucosaminyl-(1-&gt;4)]-N-acetyl-alpha-D-muramoyl-L-alanyl-D-glutamyl-meso-2,6-diaminopimeloyl-D-alanyl-D-alanine + UDP + H(+). It participates in cell wall biogenesis; peptidoglycan biosynthesis. In terms of biological role, cell wall formation. Catalyzes the transfer of a GlcNAc subunit on undecaprenyl-pyrophosphoryl-MurNAc-pentapeptide (lipid intermediate I) to form undecaprenyl-pyrophosphoryl-MurNAc-(pentapeptide)GlcNAc (lipid intermediate II). The chain is UDP-N-acetylglucosamine--N-acetylmuramyl-(pentapeptide) pyrophosphoryl-undecaprenol N-acetylglucosamine transferase from Helicobacter pylori (strain HPAG1).